Here is a 766-residue protein sequence, read N- to C-terminus: 5-methyltetrahydropteroyltriglutamate--homocysteine methyltransferase (766 aa).

Residues 16-19 (RELK) and lysine 122 contribute to the 5-methyltetrahydropteroyltri-L-glutamate site. L-homocysteine contacts are provided by residues 443–445 (IGS) and glutamate 496. Residues 443 to 445 (IGS) and glutamate 496 each bind L-methionine. Residues 527–528 (RC) and tryptophan 573 each bind 5-methyltetrahydropteroyltri-L-glutamate. Residue aspartate 611 coordinates L-homocysteine. Residue aspartate 611 participates in L-methionine binding. 5-methyltetrahydropteroyltri-L-glutamate is bound at residue glutamate 617. The Zn(2+) site is built by histidine 653, cysteine 655, and glutamate 677. Histidine 706 serves as the catalytic Proton donor. Cysteine 738 provides a ligand contact to Zn(2+).

It belongs to the vitamin-B12 independent methionine synthase family. Requires Zn(2+) as cofactor.

It carries out the reaction 5-methyltetrahydropteroyltri-L-glutamate + L-homocysteine = tetrahydropteroyltri-L-glutamate + L-methionine. It functions in the pathway amino-acid biosynthesis; L-methionine biosynthesis via de novo pathway; L-methionine from L-homocysteine (MetE route): step 1/1. Functionally, catalyzes the transfer of a methyl group from 5-methyltetrahydrofolate to homocysteine resulting in methionine formation. This chain is 5-methyltetrahydropteroyltriglutamate--homocysteine methyltransferase, found in Pseudomonas putida (strain W619).